A 360-amino-acid chain; its full sequence is Peptide chain release factor 1 (360 aa).

Gln235 carries the N5-methylglutamine modification. The segment at 285–313 (KRQQAEASTRRNLLGSGDRSDRNRTYNFP) is disordered.

This sequence belongs to the prokaryotic/mitochondrial release factor family. Post-translationally, methylated by PrmC. Methylation increases the termination efficiency of RF1.

Its subcellular location is the cytoplasm. Peptide chain release factor 1 directs the termination of translation in response to the peptide chain termination codons UAG and UAA. The polypeptide is Peptide chain release factor 1 (Enterobacter sp. (strain 638)).